Here is a 1394-residue protein sequence, read N- to C-terminus: MLGWVQRVLPQPPGTPQKTKQEEEGTEPEPELEPKPETAPEETELEEVSLPPEEPCVGKEVAAVTLGPQGTQETALTPPTSLQAQVSVAPEAHSSPRGWVLTWLRKGVEKVVPQPAHSSRPSQNIAAGLESPDQQAGAQILGQCGTGGSDEPSEPSRAEDPGPGPWLLRWFEQNLEKMLPQPPKISEGWRDEPTDAALGPEPPGPALEIKPMLQAQESPSLPAPGPPEPEEEPIPEPQPTIQASSLPPPQDSARLMAWILHRLEMALPQPVIRGKGGEQESDAPVTCDVQTISILPGEQEESHLILEEVDPHWEEDEHQEGSTSTSPRTSEAAPADEEKGKVVEQTPRELPRIQEEKEDEEEEKEDGEEEEEEGREKEEEEGEEKEEEEGREKEEEEGEKKEEEGREKEEEEGGEKEDEEGREKEEEEGRGKEEEEGGEKEEEEGRGKEEVEGREEEEDEEEEQDHSVLLDSYLVPQSEEDRSEESETQDQSEVGGAQAQGEVGGAQALSEESETQDQSEVGGAQDQSEVGGAQAQGEVGGAQEQDGVGGAQDQSTSHQELQEEALADSSGVPATEEHPELQVEDADADSRPLIAEENPPSPVQLPLSPAKSDTLAVPGSATGSLRKRLPSQDDEAEELKMLSPAASPVVAWSDPTSPQGTDDQDRATSTASQNSAIINDRLQELVKLFKERTEKVKEKLIDPDVTSDEESPKPSPAKKAPEPAPEVKPAEAGQVEEEHYCEMLCCKFKRRPWKKYQFPQSIDPLTNLMYILWLFFVVLAWNWNCWLIPVRWAFPYQTPDNIHLWLLMDYLCDLIYLLDITVFQMRLQFVRGGDIITDKKEMRNNYVKSQRFKMDMLCLLPLDLLYLKFGVNPLLRLPRCLKYMAFFEFNNRLESILSKAYVYRVIRTTAYLLYSLHLNSCLYYWASAYEGLGSTHWVYDGVGNSYIRCYYWAVKTLITIGGLPDPRTLFEIVFQGLNYFTGVFAFSVMIGQMRDVVGAATAGQTYYRSCMDSTVKYMNFYKIPRSVQNRVKTWYEYTWHSQGMLDESELMVQLPDKMRLDLAIDVNYSIVSKVALFQGCDRQMIFDMLKRLRSVVYLPNDYVCKKGEIGREMYIIQAGQVQVLGGPDGKSVLVTLKAGSVFGEISLLAVGGGNRRTANVVAHGFTNLFILDKKDLNEILVHYPESQKLLRKKARRMLRNNNKPKEKSVLILPPRAGTPKLFNAALAAAGKMGAKGGRGGRLALLRARLKELAALEAAARQQQLLEQAKSSEDAAVGEEGSASPEQPPRPEPPAPEAPAPEPTAPEPLAPEAPAPEAPAPSSPPPASQERPEGDKDAARPEEHPVRIHVTLGPDPSEQILLVEVPEKQEEKEKKEEETEEKEEGEEARKEKEEE.

Disordered regions lie at residues 1-95 (MLGW…AHSS), 112-253 (VPQP…QDSA), and 271-675 (VIRG…SQNS). Residues 1–762 (MLGWVQRVLP…WKKYQFPQSI (762 aa)) lie on the Cytoplasmic side of the membrane. Composition is skewed to polar residues over residues 68 to 86 (PQGT…QAQV) and 116 to 125 (AHSSRPSQNI). 2 stretches are compositionally biased toward basic and acidic residues: residues 300–312 (EESH…VDPH) and 336–355 (DEEK…RIQE). Residues 356–387 (EKEDEEEEKEDGEEEEEEGREKEEEEGEEKEE) are compositionally biased toward acidic residues. Residues 388-408 (EEGREKEEEEGEKKEEEGREK) show a composition bias toward basic and acidic residues. A compositionally biased stretch (acidic residues) spans 409–418 (EEEEGGEKED). Positions 419–433 (EEGREKEEEEGRGKE) are enriched in basic and acidic residues. Composition is skewed to acidic residues over residues 452–464 (EGRE…EEEQ) and 481–490 (DRSEESETQD). 2 stretches are compositionally biased toward low complexity: residues 493-508 (EVGG…GAQA) and 529-554 (EVGG…AQDQ). Residues 654-675 (DPTSPQGTDDQDRATSTASQNS) are compositionally biased toward polar residues. Positions 671–681 (ASQNSAIINDR) are calmodulin-binding CaM1. Residues 682-692 (LQELVKLFKER) carry the IQ-like motif. The segment at 699–732 (KLIDPDVTSDEESPKPSPAKKAPEPAPEVKPAEA) is disordered. Residues 763 to 793 (DPLTNLMYILWLFFVVLAWNWNCWLIPVRWA) traverse the membrane as a helical segment. Residues 794–798 (FPYQT) lie on the Extracellular side of the membrane. Residues 799–825 (PDNIHLWLLMDYLCDLIYLLDITVFQM) form a helical membrane-spanning segment. The Cytoplasmic segment spans residues 826–837 (RLQFVRGGDIIT). The chain crosses the membrane as a helical span at residues 838–861 (DKKEMRNNYVKSQRFKMDMLCLLP). Over 862-872 (LDLLYLKFGVN) the chain is Extracellular. A helical membrane pass occupies residues 873–887 (PLLRLPRCLKYMAFF). At 888–900 (EFNNRLESILSKA) the chain is on the cytoplasmic side. The segment at 900 to 999 (AYVYRVIRTT…IGQMRDVVGA (100 aa)) is ion conduction pathway. Residues 901 to 922 (YVYRVIRTTAYLLYSLHLNSCL) traverse the membrane as a helical segment. The Extracellular portion of the chain corresponds to 923 to 931 (YYWASAYEG). 2 helical membrane passes run 932–974 (LGST…EIVF) and 975–1002 (QGLN…AATA). The tract at residues 959–962 (TIGG) is selectivity filter. The Cytoplasmic segment spans residues 1003 to 1394 (GQTYYRSCMD…EEARKEKEEE (392 aa)). Positions 1082-1198 (RQMIFDMLKR…LLRKKARRML (117 aa)) are cyclic nucleotide-binding domain. The 3',5'-cyclic GMP site is built by G1143, E1144, S1146, R1156, and T1157. Position 1156 (R1156) interacts with 3',5'-cyclic AMP. Residues 1261-1267 (QQQLLEQ) form a calmodulin-binding CaM2 region. Residues 1265-1394 (LEQAKSSEDA…EEARKEKEEE (130 aa)) form a disordered region. Pro residues predominate over residues 1285-1326 (EQPPRPEPPAPEAPAPEPTAPEPLAPEAPAPEAPAPSSPPPA). 2 stretches are compositionally biased toward basic and acidic residues: residues 1329 to 1345 (ERPE…EHPV) and 1364 to 1376 (VPEK…KKEE).

This sequence belongs to the cyclic nucleotide-gated cation channel (TC 1.A.1.5) family. CNGB1 subfamily. As to quaternary structure, the rod cyclic nucleotide-gated channel is a heterotetramer composed of CNGA1 and CNGB1 subunits with 3:1 stoichiometry. CNGA1:CNGB1 channel binds Ca(2+)-bound CALM1 via CaM1 and CaM2 regions of the CNGB1 subunit; this interaction modulates the affinity of the channel for cNMPs in response to intracellular Ca(2+) levels. The olfactory cyclic nucleotide-gated channel is a heterotetramer composed of CNGA2, CNGA4 and CNGB1 subunits with 2:1:1 stoichiometry. Retina, testis, kidney, heart and brain.

Its subcellular location is the membrane. The enzyme catalyses Ca(2+)(in) = Ca(2+)(out). It catalyses the reaction Na(+)(in) = Na(+)(out). The catalysed reaction is K(+)(in) = K(+)(out). It carries out the reaction NH4(+)(in) = NH4(+)(out). The enzyme catalyses Rb(+)(in) = Rb(+)(out). It catalyses the reaction Li(+)(in) = Li(+)(out). The catalysed reaction is Cs(+)(in) = Cs(+)(out). Functionally, pore-forming subunit of the rod cyclic nucleotide-gated channel. Mediates rod photoresponses at dim light converting transient changes in intracellular cGMP levels into electrical signals. In the dark, cGMP levels are high and keep the channel open enabling a steady inward current carried by Na(+) and Ca(2+) ions that leads to membrane depolarization and neurotransmitter release from synaptic terminals. Upon photon absorption cGMP levels decline leading to channel closure and membrane hyperpolarization that ultimately slows neurotransmitter release and signals the presence of light, the end point of the phototransduction cascade. Pore-forming subunit of the olfactory cyclic nucleotide-gated channel. Operates in the cilia of olfactory sensory neurons where chemical stimulation of the odorant is converted to an electrical signal. Mediates odorant-induced cAMP-dependent Ca(2+) influx triggering neuron depolarization. The rise of intracellular Ca(2+) levels potentiates the olfactory response by activating Ca(2+)-dependent Cl(-) channels, but it also serves as a negative feedback signal to desensitize the channel for rapid adaptation to odorants. Conducts cGMP- and cAMP-gated ion currents, with permeability for monovalent and divalent cations. The selectivity for Ca(2+) over Na(+) increases with cGMP concentrations, whereas the selectivity among monovalent ions is independent of the cGMP levels. This Bos taurus (Bovine) protein is Cyclic nucleotide-gated channel beta-1.